Consider the following 546-residue polypeptide: Interleukin-20 receptor subunit alpha (546 aa).

The signal sequence occupies residues 1–32 (MHTPGTPAPGHPDPPPLLLLTLLLLLAASGRA). Residues 33 to 253 (VPCVFCGLPK…EVQTSAWKAK (221 aa)) lie on the Extracellular side of the membrane. Fibronectin type-III domains are found at residues 42–138 (KPTN…FLET) and 139–245 (QVSP…TLEV). Residues Asn-45, Asn-86, Asn-94, Asn-185, and Asn-203 are each glycosylated (N-linked (GlcNAc...) asparagine). Cys-90 and Cys-98 are joined by a disulfide. Cys-218 and Cys-239 are disulfide-bonded. The helical transmembrane segment at 254-274 (VIFWYVFLTSVIVFLFSAIGY) threads the bilayer. Residues 275–546 (LVYRYIHVGK…EWGLHVQMES (272 aa)) are Cytoplasmic-facing.

It belongs to the type II cytokine receptor family. In terms of assembly, heterodimer with IL20RB and heterodimer with IL10RB.

The protein resides in the membrane. In terms of biological role, the IL20RA/IL20RB dimer is a receptor for IL19, IL20 and IL24. The IL20RA/IL10RB dimer is a receptor for IL26. This chain is Interleukin-20 receptor subunit alpha (Il20ra), found in Mus musculus (Mouse).